A 205-amino-acid polypeptide reads, in one-letter code: Protein-L-isoaspartate O-methyltransferase (205 aa).

The active site involves S56.

It belongs to the methyltransferase superfamily. L-isoaspartyl/D-aspartyl protein methyltransferase family.

Its subcellular location is the cytoplasm. The catalysed reaction is [protein]-L-isoaspartate + S-adenosyl-L-methionine = [protein]-L-isoaspartate alpha-methyl ester + S-adenosyl-L-homocysteine. Functionally, catalyzes the methyl esterification of L-isoaspartyl residues in peptides and proteins that result from spontaneous decomposition of normal L-aspartyl and L-asparaginyl residues. It plays a role in the repair and/or degradation of damaged proteins. This Aeromonas hydrophila subsp. hydrophila (strain ATCC 7966 / DSM 30187 / BCRC 13018 / CCUG 14551 / JCM 1027 / KCTC 2358 / NCIMB 9240 / NCTC 8049) protein is Protein-L-isoaspartate O-methyltransferase.